Consider the following 152-residue polypeptide: Cytochrome c-type biogenesis protein CcmE 2 (152 aa).

The Cytoplasmic segment spans residues 1–8 (MNPQRRRR). Residues 9–29 (LWLVLALVLAGGLATTLVAMA) form a helical; Signal-anchor for type II membrane protein membrane-spanning segment. The Periplasmic portion of the chain corresponds to 30-152 (LQRNVAYLYT…HQVAPAKVTQ (123 aa)). His123 and Tyr127 together coordinate heme.

The protein belongs to the CcmE/CycJ family.

The protein localises to the cell inner membrane. Functionally, heme chaperone required for the biogenesis of c-type cytochromes. Transiently binds heme delivered by CcmC and transfers the heme to apo-cytochromes in a process facilitated by CcmF and CcmH. This is Cytochrome c-type biogenesis protein CcmE 2 from Xanthomonas campestris pv. campestris (strain 8004).